Reading from the N-terminus, the 347-residue chain is 4-hydroxy-2-oxovalerate aldolase 4 (347 aa).

The region spanning 9–259 (ITIVDTTLRD…DTGVDLFPLI (251 aa)) is the Pyruvate carboxyltransferase domain. Substrate is bound by residues 17–18 (RD), serine 171, and histidine 198. Aspartate 18 is a Mn(2+) binding site. The Mn(2+) site is built by histidine 198 and histidine 200. Tyrosine 289 is a binding site for substrate.

The protein belongs to the 4-hydroxy-2-oxovalerate aldolase family.

The enzyme catalyses (S)-4-hydroxy-2-oxopentanoate = acetaldehyde + pyruvate. The protein is 4-hydroxy-2-oxovalerate aldolase 4 of Rhodococcus opacus (strain B4).